Here is a 511-residue protein sequence, read N- to C-terminus: Kinesin-like protein 8 (511 aa).

The Kinesin motor domain occupies 5-356 (NVRVIVRVRP…LRYSEAARRI (352 aa)). An ATP-binding site is contributed by 107–114 (GQKGTGKT). A phosphoserine mark is found at Ser278, Ser279, Ser284, and Ser456. Residues 373–489 (EGELDDILTT…KLVKSQLHDY (117 aa)) adopt a coiled-coil conformation.

It belongs to the TRAFAC class myosin-kinesin ATPase superfamily. Kinesin family.

It is found in the cytoplasm. The protein resides in the cytoskeleton. This is Kinesin-like protein 8 (klp8) from Schizosaccharomyces pombe (strain 972 / ATCC 24843) (Fission yeast).